Here is a 153-residue protein sequence, read N- to C-terminus: ORM1-like protein 1 (153 aa).

Residues 1 to 26 (MNVGVAHSEVNPNTRVMNSRGMWLTY) are Cytoplasmic-facing. Transmembrane regions (helical) follow at residues 27–46 (ALGV…FSVP) and 47–64 (VAWT…YVFL). The Cytoplasmic segment spans residues 65–100 (HAVKGTPFETPDQGKARLLTHWEQLDYGVQFTSSRK). Residues 101–121 (FFTISPIILYFLASFYTKYDT) traverse the membrane as a helical segment. The Extracellular segment spans residues 122 to 123 (TH). A helical transmembrane segment spans residues 124-140 (FILNTASLLSVLIPKMP). At 141-153 (QLHGVRIFGINKY) the chain is on the cytoplasmic side.

This sequence belongs to the ORM family. As to quaternary structure, ceramide-sensitive subunit of the serine palmitoyltransferase (SPT) complex, which is also composed of SPTLC1, SPTLC2/3 and SPTSSA/B.

It localises to the endoplasmic reticulum membrane. Plays an essential role in the homeostatic regulation of sphingolipid de novo biosynthesis by modulating the activity of the serine palmitoyltransferase (SPT) in response to ceramide levels. When complexed to SPT, the binding of ceramides to its N-terminus stabilizes a conformation that block SPT substrate entry, hence preventing SPT catalytic activity. Through this mechanism, maintains ceramide levels at sufficient concentrations for the production of complex sphingolipids, but which prevents the accumulation of ceramides to levels that trigger apoptosis. The polypeptide is ORM1-like protein 1 (ORMDL1) (Bos taurus (Bovine)).